Here is a 202-residue protein sequence, read N- to C-terminus: Securin (202 aa).

A2 is subject to N-acetylalanine. A disordered region spans residues 35–90 (LDGRSQVSTPRFGKTFDAPPALPKATRKALGTVNRATEKSVKTKGPLKQKQPSFSA). The D-box signature appears at 61–64 (RKAL). Short sequence motifs (TEK-box) lie at residues 71–73 (TEK) and 94–96 (TEK). An SH3-binding motif is present at residues 163-173 (PPSPVKMPSPP). Phosphoserine; by CDK1 is present on S165.

The protein belongs to the securin family. Interacts with RPS10 and DNAJA1. Interacts with the caspase-like ESPL1, and prevents its protease activity probably by covering its active site. Interacts with TP53 and blocks its activity probably by blocking its binding to DNA. Interacts with the Ku 70 kDa subunit of ds-DNA kinase. Interacts with PTTG1IP. In terms of processing, phosphorylated at Ser-165 by CDK1 during mitosis. Post-translationally, phosphorylated in vitro by ds-DNA kinase. Ubiquitinated through 'Lys-11' linkage of ubiquitin moieties by the anaphase promoting complex (APC) at the onset of anaphase, conducting to its degradation. 'Lys-11'-linked ubiquitination is mediated by the E2 ligase UBE2C/UBCH10. In terms of tissue distribution, expressed at low level in most tissues, except in adult testis, where it is highly expressed. Overexpressed in many patients suffering from pituitary adenomas, primary epithelial neoplasias, and esophageal cancer.

It localises to the cytoplasm. It is found in the nucleus. Regulatory protein, which plays a central role in chromosome stability, in the p53/TP53 pathway, and DNA repair. Probably acts by blocking the action of key proteins. During the mitosis, it blocks Separase/ESPL1 function, preventing the proteolysis of the cohesin complex and the subsequent segregation of the chromosomes. At the onset of anaphase, it is ubiquitinated, conducting to its destruction and to the liberation of ESPL1. Its function is however not limited to a blocking activity, since it is required to activate ESPL1. Negatively regulates the transcriptional activity and related apoptosis activity of TP53. The negative regulation of TP53 may explain the strong transforming capability of the protein when it is overexpressed. May also play a role in DNA repair via its interaction with Ku, possibly by connecting DNA damage-response pathways with sister chromatid separation. The polypeptide is Securin (PTTG1) (Homo sapiens (Human)).